The sequence spans 204 residues: Ribosomal RNA small subunit methyltransferase J (204 aa).

Residues 55–56, 71–72, and D123 contribute to the S-adenosyl-L-methionine site; these read RD and ER.

The protein belongs to the methyltransferase superfamily. RsmJ family.

It localises to the cytoplasm. The catalysed reaction is guanosine(1516) in 16S rRNA + S-adenosyl-L-methionine = N(2)-methylguanosine(1516) in 16S rRNA + S-adenosyl-L-homocysteine + H(+). Specifically methylates the guanosine in position 1516 of 16S rRNA. The chain is Ribosomal RNA small subunit methyltransferase J from Rhodopseudomonas palustris (strain ATCC BAA-98 / CGA009).